The following is a 382-amino-acid chain: Homoserine O-acetyltransferase (382 aa).

One can recognise an AB hydrolase-1 domain in the interval 50–360 (NAVLICHALT…DKGHDAFLLD (311 aa)). The active-site Nucleophile is Ser-155. Position 225 (Arg-225) interacts with substrate. Residues Asp-321 and His-354 contribute to the active site. Asp-355 lines the substrate pocket.

It belongs to the AB hydrolase superfamily. MetX family. Homodimer.

The protein resides in the cytoplasm. It catalyses the reaction L-homoserine + acetyl-CoA = O-acetyl-L-homoserine + CoA. Its pathway is amino-acid biosynthesis; L-methionine biosynthesis via de novo pathway; O-acetyl-L-homoserine from L-homoserine: step 1/1. Transfers an acetyl group from acetyl-CoA to L-homoserine, forming acetyl-L-homoserine. The chain is Homoserine O-acetyltransferase from Caulobacter vibrioides (strain ATCC 19089 / CIP 103742 / CB 15) (Caulobacter crescentus).